Consider the following 303-residue polypeptide: Aspartate carbamoyltransferase catalytic subunit (303 aa).

Residues arginine 49 and threonine 50 each contribute to the carbamoyl phosphate site. Lysine 77 contributes to the L-aspartate binding site. Arginine 99, histidine 126, and glutamine 129 together coordinate carbamoyl phosphate. Positions 159 and 211 each coordinate L-aspartate. Positions 252 and 253 each coordinate carbamoyl phosphate.

It belongs to the aspartate/ornithine carbamoyltransferase superfamily. ATCase family. As to quaternary structure, heterododecamer (2C3:3R2) of six catalytic PyrB chains organized as two trimers (C3), and six regulatory PyrI chains organized as three dimers (R2).

The enzyme catalyses carbamoyl phosphate + L-aspartate = N-carbamoyl-L-aspartate + phosphate + H(+). It functions in the pathway pyrimidine metabolism; UMP biosynthesis via de novo pathway; (S)-dihydroorotate from bicarbonate: step 2/3. Its function is as follows. Catalyzes the condensation of carbamoyl phosphate and aspartate to form carbamoyl aspartate and inorganic phosphate, the committed step in the de novo pyrimidine nucleotide biosynthesis pathway. This Listeria monocytogenes serotype 4b (strain F2365) protein is Aspartate carbamoyltransferase catalytic subunit.